The sequence spans 701 residues: Polyribonucleotide nucleotidyltransferase (701 aa).

Residues Asp-487 and Asp-493 each coordinate Mg(2+). The region spanning 554 to 613 (PTMIAMKIDTDKIRDVIGKGGATIRAICEETKASIDIEDDGSIKIFGESKEAAEAARQRV) is the KH domain. Residues 623-691 (GKIYVGKVER…NRGRIKLSIK (69 aa)) form the S1 motif domain.

Belongs to the polyribonucleotide nucleotidyltransferase family. Component of the RNA degradosome, which is a multiprotein complex involved in RNA processing and mRNA degradation. Mg(2+) is required as a cofactor.

It is found in the cytoplasm. It carries out the reaction RNA(n+1) + phosphate = RNA(n) + a ribonucleoside 5'-diphosphate. Involved in mRNA degradation. Catalyzes the phosphorolysis of single-stranded polyribonucleotides processively in the 3'- to 5'-direction. The sequence is that of Polyribonucleotide nucleotidyltransferase from Pseudomonas savastanoi pv. phaseolicola (strain 1448A / Race 6) (Pseudomonas syringae pv. phaseolicola (strain 1448A / Race 6)).